Reading from the N-terminus, the 518-residue chain is Vesicular inhibitory amino acid transporter (518 aa).

Residues 1–125 (MATLIRSKLS…WNVTNAIQGM (125 aa)) are Cytoplasmic-facing. The chain crosses the membrane as a helical span at residues 126–146 (FVLGLPYAILHGGYLGLFLII). The Lumenal, vesicle portion of the chain corresponds to 147 to 197 (FAAVVCCYTGKILIACLYEENEDGETVRVRDSYVDIANACCAPRFPKLGGR). A helical transmembrane segment spans residues 198–218 (VVNVAQIIELVMTCILYVVVS). The Cytoplasmic segment spans residues 219-258 (GNLMYNSFPNLPISQKSWSIMATAVLLPCAFLKNLKAVSK). Residues 259–279 (FSLLCTVAHFVINILVIAYCL) form a helical membrane-spanning segment. Residues 280-298 (SRARDWAWDKVKFYIDVKK) are Lumenal, vesicle-facing. The helical transmembrane segment at 299–319 (FPISIGIIVFSYTSQIFLPSL) threads the bilayer. Topologically, residues 320–334 (EGNMQSPREFHCMMN) are cytoplasmic. The helical transmembrane segment at 335–355 (WTHIAACILKGLFALVAYLTW) threads the bilayer. Residues 356-376 (ADETKEVITDNLPSTIRAVVN) lie on the Lumenal, vesicle side of the membrane. A helical transmembrane segment spans residues 377-397 (LFLVSKALLSYPLPFFAAVEV). The Cytoplasmic portion of the chain corresponds to 398–431 (LEKSLFQEGARAFFPNCYGGDGRLKSWGLTLRCA). A helical membrane pass occupies residues 432–452 (LVVFTLLMAIYVPHFALLMGL). Residues 453–454 (TG) are Lumenal, vesicle-facing. The chain crosses the membrane as a helical span at residues 455 to 475 (SLTGAGLCFLLPSLFHLKLMW). Residues 476-482 (RQLLWHQ) are Cytoplasmic-facing. A helical membrane pass occupies residues 483–503 (VFFDVSIFVIGSICSVSGFVH). Residues 504–518 (SLEGLIEAYAYNIED) lie on the Lumenal, vesicle side of the membrane.

The protein belongs to the amino acid/polyamine transporter 2 family. In terms of tissue distribution, initially expressed in late neurula stages in the anterior spinal cord. By early tailbud stages, expression extends posteriorly along the entire developing spinal cord and appears in the hindbrain. In late tailbud embryos, expressed in the forebrain, midbrain, hindbrain, spinal cord and retina. In swimming tadpoles, expressed in an extended and more intense pattern including interneurons.

The protein localises to the cytoplasmic vesicle membrane. The protein resides in the presynapse. It catalyses the reaction 4-aminobutanoate(out) + n H(+)(in) = 4-aminobutanoate(in) + n H(+)(out). The enzyme catalyses glycine(out) + n H(+)(in) = glycine(in) + n H(+)(out). The catalysed reaction is beta-alanine(out) + n H(+)(in) = beta-alanine(in) + n H(+)(out). Functionally, antiporter that exchanges vesicular protons for cytosolic 4-aminobutanoate or to a lesser extend glycine, thus allowing their secretion from nerve terminals. The transport is equally dependent on the chemical and electrical components of the proton gradient. May also transport beta-alanine. Acidification of GABAergic synaptic vesicles is a prerequisite for 4-aminobutanoate uptake. This Xenopus laevis (African clawed frog) protein is Vesicular inhibitory amino acid transporter.